Consider the following 143-residue polypeptide: Small ribosomal subunit protein uS9 (143 aa).

Positions 123 to 143 (RPEPKKFGGRGARSRFQKSYR) are disordered. A compositionally biased stretch (basic residues) spans 134-143 (ARSRFQKSYR).

It belongs to the universal ribosomal protein uS9 family.

The polypeptide is Small ribosomal subunit protein uS9 (RPS16) (Kluyveromyces lactis (strain ATCC 8585 / CBS 2359 / DSM 70799 / NBRC 1267 / NRRL Y-1140 / WM37) (Yeast)).